Here is a 287-residue protein sequence, read N- to C-terminus: tRNA pseudouridine synthase B (287 aa).

The Nucleophile role is filled by Asp38.

The protein belongs to the pseudouridine synthase TruB family. Type 1 subfamily.

The enzyme catalyses uridine(55) in tRNA = pseudouridine(55) in tRNA. In terms of biological role, responsible for synthesis of pseudouridine from uracil-55 in the psi GC loop of transfer RNAs. This chain is tRNA pseudouridine synthase B, found in Mycoplasma mobile (strain ATCC 43663 / 163K / NCTC 11711) (Mesomycoplasma mobile).